The primary structure comprises 357 residues: Probable dual-specificity RNA methyltransferase RlmN (357 aa).

The active-site Proton acceptor is the Glu-92. Positions 98 to 336 (HKYGLSVCVT…CGVRLEHGTD (239 aa)) constitute a Radical SAM core domain. A disulfide bond links Cys-105 and Cys-341. Residues Cys-112, Cys-116, and Cys-119 each contribute to the [4Fe-4S] cluster site. S-adenosyl-L-methionine is bound by residues 164-165 (GE), Ser-196, 219-221 (SLH), and Asn-297. Cys-341 acts as the S-methylcysteine intermediate in catalysis.

This sequence belongs to the radical SAM superfamily. RlmN family. [4Fe-4S] cluster is required as a cofactor.

It is found in the cytoplasm. The enzyme catalyses adenosine(2503) in 23S rRNA + 2 reduced [2Fe-2S]-[ferredoxin] + 2 S-adenosyl-L-methionine = 2-methyladenosine(2503) in 23S rRNA + 5'-deoxyadenosine + L-methionine + 2 oxidized [2Fe-2S]-[ferredoxin] + S-adenosyl-L-homocysteine. The catalysed reaction is adenosine(37) in tRNA + 2 reduced [2Fe-2S]-[ferredoxin] + 2 S-adenosyl-L-methionine = 2-methyladenosine(37) in tRNA + 5'-deoxyadenosine + L-methionine + 2 oxidized [2Fe-2S]-[ferredoxin] + S-adenosyl-L-homocysteine. In terms of biological role, specifically methylates position 2 of adenine 2503 in 23S rRNA and position 2 of adenine 37 in tRNAs. The sequence is that of Probable dual-specificity RNA methyltransferase RlmN from Exiguobacterium sibiricum (strain DSM 17290 / CCUG 55495 / CIP 109462 / JCM 13490 / 255-15).